The chain runs to 398 residues: Elongation factor Tu (398 aa).

The 198-residue stretch at 10–207 (KPHVNIGTIG…TVDEYIPEPE (198 aa)) folds into the tr-type G domain. The interval 19–26 (GHVDHGKT) is G1. 19-26 (GHVDHGKT) is a GTP binding site. T26 lines the Mg(2+) pocket. Residues 63-67 (GITIN) form a G2 region. The interval 84 to 87 (DAPG) is G3. GTP is bound by residues 84–88 (DAPGH) and 139–142 (NKVD). Positions 139–142 (NKVD) are G4. Residues 177–179 (SAL) are G5.

Belongs to the TRAFAC class translation factor GTPase superfamily. Classic translation factor GTPase family. EF-Tu/EF-1A subfamily. Monomer.

It is found in the cytoplasm. It catalyses the reaction GTP + H2O = GDP + phosphate + H(+). GTP hydrolase that promotes the GTP-dependent binding of aminoacyl-tRNA to the A-site of ribosomes during protein biosynthesis. The sequence is that of Elongation factor Tu from Streptococcus sanguinis (strain SK36).